A 527-amino-acid chain; its full sequence is Methane monooxygenase component A alpha chain (527 aa).

3 residues coordinate Fe cation: E114, E144, and H147. C151 is an active-site residue. Fe cation-binding residues include E209, E243, and H246.

This sequence belongs to the TmoA/XamoA family. In terms of assembly, m.capsulatus has two forms of methane monooxygenase, a soluble and a membrane-bound type. The soluble type consists of four components (A to D): protein A, comprising three chains, in an alpha-2, beta-2, gamma-2 configuration, is a nonheme iron protein containing an unusual mu-hydroxo bridge structure at its active site and interacts with both oxygen and methane. The cofactor is Fe cation.

It carries out the reaction methane + NADH + O2 + H(+) = methanol + NAD(+) + H2O. It catalyses the reaction methane + NADPH + O2 + H(+) = methanol + NADP(+) + H2O. Responsible for the initial oxygenation of methane to methanol in methanotrophs. It also catalyzes the monohydroxylation of a variety of unactivated alkenes, alicyclic, aromatic and heterocyclic compounds. The chain is Methane monooxygenase component A alpha chain (mmoX) from Methylococcus capsulatus (strain ATCC 33009 / NCIMB 11132 / Bath).